Here is a 566-residue protein sequence, read N- to C-terminus: Autophagy-related protein 22-1 (566 aa).

A helical transmembrane segment spans residues 38–58 (YPIAAEVFAVVAVGAFLPVIL). Asn103 carries an N-linked (GlcNAc...) asparagine glycan. A run of 3 helical transmembrane segments spans residues 110-130 (SFAM…LVCF), 146-168 (AFAY…VYFL), and 179-199 (SLGC…ANHA). N-linked (GlcNAc...) asparagine glycosylation is present at Asn200. 8 helical membrane passes run 242-262 (GYGY…LWLF), 278-298 (VILL…LLWL), 351-371 (FLIS…TAVL), 382-402 (IAIA…AFAW), 416-436 (ILLC…LGFI), 451-471 (WEIY…SSYA), 488-510 (FALY…GWLV), and 519-539 (AFIF…MLDV). The tract at residues 547 to 566 (KAMADGEGRGRGTYERVREE) is disordered.

It belongs to the ATG22 family.

Its subcellular location is the vacuole membrane. Its function is as follows. Vacuolar effluxer which mediate the efflux of amino acids resulting from autophagic degradation. The release of autophagic amino acids allows the maintenance of protein synthesis and viability during nitrogen starvation. This chain is Autophagy-related protein 22-1 (ATG22-1), found in Phaeosphaeria nodorum (strain SN15 / ATCC MYA-4574 / FGSC 10173) (Glume blotch fungus).